The chain runs to 319 residues: tRNA N6-adenosine threonylcarbamoyltransferase (319 aa).

Fe cation contacts are provided by His-110 and His-114. Substrate is bound by residues Val-132 to Gly-136, Asp-165, Gly-178, Asp-182, and Asn-271. Asp-300 lines the Fe cation pocket.

This sequence belongs to the KAE1 / TsaD family. It depends on Fe(2+) as a cofactor.

It is found in the cytoplasm. The catalysed reaction is L-threonylcarbamoyladenylate + adenosine(37) in tRNA = N(6)-L-threonylcarbamoyladenosine(37) in tRNA + AMP + H(+). Functionally, required for the formation of a threonylcarbamoyl group on adenosine at position 37 (t(6)A37) in tRNAs that read codons beginning with adenine. Is involved in the transfer of the threonylcarbamoyl moiety of threonylcarbamoyl-AMP (TC-AMP) to the N6 group of A37, together with TsaE and TsaB. TsaD likely plays a direct catalytic role in this reaction. In Mycoplasma capricolum subsp. capricolum (strain California kid / ATCC 27343 / NCTC 10154), this protein is tRNA N6-adenosine threonylcarbamoyltransferase.